A 726-amino-acid polypeptide reads, in one-letter code: Tripartite terminase subunit 1 (726 aa).

The C3H1-type zinc finger occupies Cys189 to His217. Tyr626–Arg633 contacts ATP.

Belongs to the herpesviridae TRM1 protein family. As to quaternary structure, associates with TRM2 and TRM3 to form the tripartite terminase complex. Interacts with portal protein.

It is found in the host nucleus. Component of the molecular motor that translocates viral genomic DNA in empty capsid during DNA packaging. Forms a tripartite terminase complex together with TRM2 and TRM3 in the host cytoplasm. Once the complex reaches the host nucleus, it interacts with the capsid portal vertex. This portal forms a ring in which genomic DNA is translocated into the capsid. TRM1 carries an endonuclease activity that plays an important role for the cleavage of concatemeric viral DNA into unit length genomes. This Homo sapiens (Human) protein is Tripartite terminase subunit 1.